Reading from the N-terminus, the 247-residue chain is MHIMVTNDDGIQAPGIQALASALRVLGEVTVVAPDRERSAVGHALTLNSPLRVFELRDGFYAVDGTPTDCVNMGIHSLLPFRPDLIVSGINHGANLGDDVTYSGTVAAAIEATLMGIPAIAVSLATQERSGHFPEAAQIAVRVARQVLSNGLPEDTFLNVNVPDCPAEEIRPPLVTRQGKRSFVGNVIDKTDPRGRKYYWIGSGEADFNDYEGTDFHAINRKHVSITPLHLDLTNYASMKVITTWVF.

Aspartate 8, aspartate 9, serine 39, and asparagine 91 together coordinate a divalent metal cation.

This sequence belongs to the SurE nucleotidase family. A divalent metal cation serves as cofactor.

The protein localises to the cytoplasm. The enzyme catalyses a ribonucleoside 5'-phosphate + H2O = a ribonucleoside + phosphate. In terms of biological role, nucleotidase that shows phosphatase activity on nucleoside 5'-monophosphates. The polypeptide is 5'-nucleotidase SurE (Pelobacter propionicus (strain DSM 2379 / NBRC 103807 / OttBd1)).